The primary structure comprises 205 residues: Thymidylate kinase (205 aa).

10–17 (GIDGAGKS) is an ATP binding site.

It belongs to the thymidylate kinase family.

It catalyses the reaction dTMP + ATP = dTDP + ADP. Functionally, phosphorylation of dTMP to form dTDP in both de novo and salvage pathways of dTTP synthesis. In Ralstonia pickettii (strain 12J), this protein is Thymidylate kinase.